The chain runs to 350 residues: Probable flap endonuclease 1 homolog (350 aa).

The interval 1–95 (MGITKLAHLI…AVLEKRAQST (95 aa)) is N-domain. Asp34 is a Mg(2+) binding site. Residue Arg61 coordinates DNA. Mg(2+) contacts are provided by Asp77, Glu130, Glu132, Asp151, and Asp153. The interval 110-223 (NQECLRLLHL…SRALKLIKEH (114 aa)) is I-domain. Residue Glu130 coordinates DNA. Residues Gly201 and Asp203 each contribute to the DNA site. Position 203 (Asp203) interacts with Mg(2+). The tract at residues 317 to 325 (RQSRLEDFF) is interaction with PCNA.

This sequence belongs to the XPG/RAD2 endonuclease family. FEN1 subfamily. Interacts with PCNA. Three molecules of fen1 bind to one PCNA trimer with each molecule binding to one PCNA monomer. PCNA stimulates the nuclease activity without altering cleavage specificity. Requires Mg(2+) as cofactor. Post-translationally, phosphorylated. Phosphorylation upon DNA damage induces relocalization to the nuclear plasma.

It is found in the nucleus. Its subcellular location is the nucleolus. The protein resides in the nucleoplasm. It localises to the mitochondrion. Functionally, structure-specific nuclease with 5'-flap endonuclease and 5'-3' exonuclease activities involved in DNA replication and repair. During DNA replication, cleaves the 5'-overhanging flap structure that is generated by displacement synthesis when DNA polymerase encounters the 5'-end of a downstream Okazaki fragment. It enters the flap from the 5'-end and then tracks to cleave the flap base, leaving a nick for ligation. Also involved in the long patch base excision repair (LP-BER) pathway, by cleaving within the apurinic/apyrimidinic (AP) site-terminated flap. Acts as a genome stabilization factor that prevents flaps from equilibrating into structures that lead to duplications and deletions. Also possesses 5'-3' exonuclease activity on nicked or gapped double-stranded DNA, and exhibits RNase H activity. Also involved in replication and repair of rDNA and in repairing mitochondrial DNA. The chain is Probable flap endonuclease 1 homolog from Danio rerio (Zebrafish).